The primary structure comprises 185 residues: Avirulence protein ATR39-1 (185 aa).

The first 20 residues, 1–20 (MVKCTPLLALTVIVSAGSDA), serve as a signal peptide directing secretion. Residues 49–66 (RVLRASDVPDEVAAGESR) carry the RxLR-dEER motif.

The protein belongs to the RxLR effector family.

The protein resides in the secreted. It localises to the host cell. In terms of biological role, secreted effector that acts as an elicitor of hypersensitive response (HR) specifically on plants carrying defense protein RPP39. The allele ATR39-1 is recognized by RPP39, whereas the ATR39-2 allele is not recognized. The chain is Avirulence protein ATR39-1 from Hyaloperonospora arabidopsidis (strain Emoy2) (Downy mildew agent).